Consider the following 243-residue polypeptide: tRNA pseudouridine synthase A (243 aa).

Residue Asp-51 is the Nucleophile of the active site. A substrate-binding site is contributed by Tyr-111.

Belongs to the tRNA pseudouridine synthase TruA family. As to quaternary structure, homodimer.

It catalyses the reaction uridine(38/39/40) in tRNA = pseudouridine(38/39/40) in tRNA. Its function is as follows. Formation of pseudouridine at positions 38, 39 and 40 in the anticodon stem and loop of transfer RNAs. This is tRNA pseudouridine synthase A from Neorickettsia sennetsu (strain ATCC VR-367 / Miyayama) (Ehrlichia sennetsu).